The following is an 84-amino-acid chain: UPF0457 protein BC_3525 (84 aa).

This sequence belongs to the UPF0457 family.

This is UPF0457 protein BC_3525 from Bacillus cereus (strain ATCC 14579 / DSM 31 / CCUG 7414 / JCM 2152 / NBRC 15305 / NCIMB 9373 / NCTC 2599 / NRRL B-3711).